A 352-amino-acid polypeptide reads, in one-letter code: MPSHPKRFQINAKNYFLTYPQCSLSKEESLSQLQALNTPINKKFIKICRELHEDGQPHLHVLIQFEGKYCCQNQRFFDLVSPTRSAHFHPNIQRAKSSSDVKTYIDKDGDTLVWGEFQVDGRSARGGCQTSNDAAAEALNASSKEEALQIIREKIPEKYLFQFHNLNSNLDRIFDKTPEPWLPPFHVSSFTNVPDEMRQWAENYFGKSSAARPERPISIIIEGDSRTGKTMWARSLGPHNYLSGHLDLNSRVYSNKVEYNVIDDVTPQYLKLKHWKELIGAQRDWQTNCKYGKPVQIKGGIPSIVLCNPGEGASYKVFLDKEENTPLKNWTFHNAKFVFLNSPLYQSSTQSS.

In terms of domain architecture, CRESS-DNA virus Rep endonuclease spans Q9–F117. The short motif at F16 to Y19 is the RCR-1 element. A divalent metal cation contacts are provided by E50, H58, and H60. The RCR-2 motif lies at H58–H60. Y104 (for DNA cleavage activity) is an active-site residue. The RCR-3 motif lies at Y104–K107. D108 is a binding site for a divalent metal cation. The binding to RBR1 stretch occupies residues K144 to K154. The segment at E157–T177 is oligomerization. Position 223–230 (G223–T230) interacts with ATP.

The protein belongs to the geminiviridae Rep protein family. As to quaternary structure, homooligomer. Interacts with the replication enhancer protein (REn). Interacts with host retinoblastoma-related protein 1 (RBR1), and may thereby induce the transcription of host replicative enzymes even if the cell is not dividing anymore. Interacts with host PCNA. Interacts with host SCE1 protein. Interacts with host GRIK1, GRIK2, GRIMP and histone H3. It depends on Mg(2+) as a cofactor. Mn(2+) serves as cofactor.

It localises to the host nucleus. Essential for the replication of viral ssDNA. The closed circular ssDNA genome is first converted to a superhelical dsDNA. Rep binds a specific region at the genome origin of replication. It introduces an endonucleolytic nick within the conserved sequence 5'-TAATATTAC-3' in the intergenic region of the genome present in all geminiviruses, thereby initiating the rolling circle replication (RCR). Following cleavage, binds covalently to the 5'-phosphate of DNA as a tyrosyl ester. The cleavage gives rise to a free 3'-OH that serves as a primer for the cellular DNA polymerase. The polymerase synthesizes the (+) strand DNA by rolling circle mechanism. After one round of replication, a Rep-catalyzed nucleotidyl transfer reaction releases a circular single-stranded virus genome, thereby terminating the replication. Displays origin-specific DNA cleavage, nucleotidyl transferase, ATPase and helicase activities. This is Replication-associated protein from Solanum lycopersicum (Tomato).